A 137-amino-acid chain; its full sequence is Mediator of RNA polymerase II transcription subunit 21 (137 aa).

Residues 37-56 (PKDTIAPSKADQPPEVDTLP) are disordered. A coiled-coil region spans residues 87 to 130 (GLDNSEQDQLQSIKELEEELNVAEKQRQEAVKEKDEVLVKLDQT).

This sequence belongs to the Mediator complex subunit 21 family. In terms of assembly, component of the Mediator complex.

The protein localises to the nucleus. Its function is as follows. Component of the Mediator complex, a coactivator involved in the regulated transcription of nearly all RNA polymerase II-dependent genes. Mediator functions as a bridge to convey information from gene-specific regulatory proteins to the basal RNA polymerase II transcription machinery. Mediator is recruited to promoters by direct interactions with regulatory proteins and serves as a scaffold for the assembly of a functional preinitiation complex with RNA polymerase II and the general transcription factors. This is Mediator of RNA polymerase II transcription subunit 21 (srb-7) from Neurospora crassa (strain ATCC 24698 / 74-OR23-1A / CBS 708.71 / DSM 1257 / FGSC 987).